The following is a 210-amino-acid chain: MSDAKELKQVLTGPIVNNNPIALQVLGVCSALAVTSKLETALVMALALTAVTAFSNLFISMIRNHIPSSVRIIVQMTIIASLVIVVDQLLQAYAYQISKQLSVFVGLIITNCIVMGRAEAYAMKTPPMMSFMDGIGNGLGYGAILLAVGFVRELFGNGSLFGVQILHKISDGGWYQPNGLLLLPPSAFFLIGMLIWIIRTYKPEQVEAKG.

The next 6 helical transmembrane spans lie at 14 to 34, 42 to 62, 72 to 92, 103 to 123, 131 to 151, and 178 to 198; these read PIVN…ALAV, LVMA…ISMI, IIVQ…LLQA, VFVG…AYAM, FMDG…VGFV, and NGLL…IWII.

Belongs to the NqrDE/RnfAE family. As to quaternary structure, composed of six subunits; NqrA, NqrB, NqrC, NqrD, NqrE and NqrF.

It localises to the cell inner membrane. It carries out the reaction a ubiquinone + n Na(+)(in) + NADH + H(+) = a ubiquinol + n Na(+)(out) + NAD(+). NQR complex catalyzes the reduction of ubiquinone-1 to ubiquinol by two successive reactions, coupled with the transport of Na(+) ions from the cytoplasm to the periplasm. NqrA to NqrE are probably involved in the second step, the conversion of ubisemiquinone to ubiquinol. This is Na(+)-translocating NADH-quinone reductase subunit D from Shewanella oneidensis (strain ATCC 700550 / JCM 31522 / CIP 106686 / LMG 19005 / NCIMB 14063 / MR-1).